The primary structure comprises 103 residues: Large ribosomal subunit protein bL21 (103 aa).

Belongs to the bacterial ribosomal protein bL21 family. As to quaternary structure, part of the 50S ribosomal subunit. Contacts protein L20.

Its function is as follows. This protein binds to 23S rRNA in the presence of protein L20. This chain is Large ribosomal subunit protein bL21, found in Borreliella burgdorferi (strain ZS7) (Borrelia burgdorferi).